Reading from the N-terminus, the 450-residue chain is 23S rRNA (uracil(1939)-C(5))-methyltransferase RlmD (450 aa).

The tract at residues 1-22 is disordered; the sequence is MARNKGGLRFQPSGGARGPAIP. In terms of domain architecture, TRAM spans 20-78; that stretch reads AIPVGKKQRLTIERLAHDGRGIAHEAGMTWFVSGGLPGEELEARVLGARSKVVDARSER. 4 residues coordinate [4Fe-4S] cluster: cysteine 91, cysteine 97, cysteine 100, and cysteine 179. Positions 283, 312, 317, 333, 360, and 381 each coordinate S-adenosyl-L-methionine. Cysteine 407 functions as the Nucleophile in the catalytic mechanism.

The protein belongs to the class I-like SAM-binding methyltransferase superfamily. RNA M5U methyltransferase family. RlmD subfamily.

The catalysed reaction is uridine(1939) in 23S rRNA + S-adenosyl-L-methionine = 5-methyluridine(1939) in 23S rRNA + S-adenosyl-L-homocysteine + H(+). Catalyzes the formation of 5-methyl-uridine at position 1939 (m5U1939) in 23S rRNA. This is 23S rRNA (uracil(1939)-C(5))-methyltransferase RlmD from Pseudomonas aeruginosa (strain UCBPP-PA14).